The primary structure comprises 132 residues: Ribosome-binding factor A (132 aa).

This sequence belongs to the RbfA family. In terms of assembly, monomer. Binds 30S ribosomal subunits, but not 50S ribosomal subunits or 70S ribosomes.

The protein resides in the cytoplasm. Functionally, one of several proteins that assist in the late maturation steps of the functional core of the 30S ribosomal subunit. Associates with free 30S ribosomal subunits (but not with 30S subunits that are part of 70S ribosomes or polysomes). Required for efficient processing of 16S rRNA. May interact with the 5'-terminal helix region of 16S rRNA. The polypeptide is Ribosome-binding factor A (Xanthomonas campestris pv. campestris (strain 8004)).